The chain runs to 1362 residues: Bromodomain-containing protein 4 (1362 aa).

The disordered stretch occupies residues 1 to 58 (MSAESGPGTRLRNLPVMGDGLETSQMSTTQAQAQPQPANAASTNPPPPETSNPNKPKR). The segment covering 23–43 (TSQMSTTQAQAQPQPANAAST) has biased composition (low complexity). In terms of domain architecture, Bromo 1 spans 58–164 (RQTNQLQYLL…KLFLQKINEL (107 aa)). Lys-99 participates in a covalent cross-link: Glycyl lysine isopeptide (Lys-Gly) (interchain with G-Cter in SUMO2). Disordered regions lie at residues 174 to 229 (VQAK…PAVT), 242 to 352 (VPPQ…KVSE), and 463 to 615 (EPVV…YEEK). Low complexity predominate over residues 197–211 (PNTTQASTPPQTQTP). Composition is skewed to pro residues over residues 212 to 227 (QPNPPPVQATPHPFPA) and 243 to 266 (PPQPLQTPPPVPPQPQPPPAPAPQ). Residues 320 to 336 (QRRESSRPVKPPKKDVP) are compositionally biased toward basic and acidic residues. Residues 348 to 457 (SKVSEQLKCC…DVFEMRFAKM (110 aa)) form the Bromo 2 domain. Ser-470 is modified (phosphoserine). Residues 478 to 497 (KVVAPPSSSDSSSDSSSDSD) show a composition bias toward low complexity. Residues Ser-484, Ser-488, Ser-492, Ser-494, Ser-498, Ser-499, and Ser-503 each carry the phosphoserine; by CK2 modification. The tract at residues 484–503 (SSSDSSSDSSSDSDSSTDDS) is NPS region. Residues 524-579 (QLAALSQPQQNKPKKKEKDKKEKKKEKHKRKEEVEENKKSKAKEPPPKKTKKNNSS) form a BID region region. The segment covering 535–553 (KPKKKEKDKKEKKKEKHKR) has biased composition (basic residues). Residues 554–570 (KEEVEENKKSKAKEPPP) are compositionally biased toward basic and acidic residues. Lys-585 is covalently cross-linked (Glycyl lysine isopeptide (Lys-Gly) (interchain with G-Cter in SUMO2)). Residues 600-682 (ESEEEDKCKP…SCLRKKRKPQ (83 aa)) enclose the NET domain. Residue Ser-601 is modified to Phosphoserine. Positions 605–615 (DKCKPMSYEEK) are enriched in basic and acidic residues. Residues Lys-645 and Lys-694 each participate in a glycyl lysine isopeptide (Lys-Gly) (interchain with G-Cter in SUMO2) cross-link. The disordered stretch occupies residues 674-1100 (CLRKKRKPQA…PKKQELRAAS (427 aa)). Low complexity predominate over residues 699 to 712 (SSSESESSSESSSS). Over residues 724-744 (KSKKKGHPGREQKKHHHHHHQ) the composition is skewed to basic residues. Pro residues-rich tracts occupy residues 751–785 (APVPQQPPPPPQQPPPPPPPQQQQQPPPPPPPPSM), 833–846 (PELPPHLPQPPEHS), and 881–890 (PPKPARPPAV). The span at 926 to 936 (MQMQLYLQQLQ) shows a compositional bias: low complexity. Pro residues-rich tracts occupy residues 953–964 (QPPPPLPPPPHP), 973–996 (QPPPPPPPQPQPPPQQQHQPPPRP), and 1010–1034 (QPPPPQGQQPPHPPPGQQPPPPQPA). Positions 1041-1050 (QHHHSPRHHK) are enriched in basic residues. The segment at 1047–1362 (RHHKSDPYST…LLSIFEENLF (316 aa)) is C-terminal (CTD) region. A Glycyl lysine isopeptide (Lys-Gly) (interchain with G-Cter in SUMO2) cross-link involves residue Lys-1050. Positions 1071–1091 (PQMSQFQSLTHQSPPQQNVQP) are enriched in polar residues. Lys-1111 is modified (N6-acetyllysine; alternate). Lys-1111 participates in a covalent cross-link: Glycyl lysine isopeptide (Lys-Gly) (interchain with G-Cter in SUMO1); alternate. A Glycyl lysine isopeptide (Lys-Gly) (interchain with G-Cter in SUMO2); alternate cross-link involves residue Lys-1111. Positions 1116–1339 (HSPIIRSEPF…KREQERRRRE (224 aa)) are disordered. Residues Ser-1117 and Ser-1126 each carry the phosphoserine modification. Over residues 1175–1196 (PDKDKQKQEPKTPVAPKKDLKI) the composition is skewed to basic and acidic residues. A Glycyl lysine isopeptide (Lys-Gly) (interchain with G-Cter in SUMO2) cross-link involves residue Lys-1197. 2 positions are modified to phosphoserine: Ser-1201 and Ser-1204. Positions 1211–1223 (TTPSSTAKSSSDS) are enriched in low complexity. The span at 1225-1284 (EQFRRAAREKEEREKALKAQAEHAEKEKERLRQERMRSREDEDALEQARRAHEEARRRQE) shows a compositional bias: basic and acidic residues. The span at 1285-1313 (QQQQQRQEQQQQQQQQAAAVAAAATPQAQ) shows a compositional bias: low complexity. Residues 1323–1339 (QQRELARKREQERRRRE) are compositionally biased toward basic and acidic residues.

The protein belongs to the BET family. In terms of assembly, interacts with p53/TP53; the interaction is direct. Interacts (via CTD region) with CDK9 and CCNT1, acting as an associated component of P-TEFb complex. Interacts with RELA (when acetylated at 'Lys-310'). Interacts (via NET domain) with NSD3, CHD4, BICRA and ATAD5. The interaction with BICRA bridges BRD4 to the GBAF complex. Interacts (via NET domain) with JMJD6 (via JmjC and N-terminal domains); the interaction is stronger in presence of ssRNA and recruits JMJD6 on distal enhancers. Interacts with NSD3. Interacts with NIPBL. As to quaternary structure, interacts with SMC2. Interacts with NCAPD3. (Microbial infection) Interacts with bovine papillomavirus type 1 regulatory protein E2. This interactions may serve for the tethering of viral genomes to host mitotic chromosomes allowing successful partitioning of the viral genome during cell division. In terms of assembly, (Microbial infection) Interacts with Epstein-Barr virus (EBV) protein EBNA1; this interaction facilitates transcriptional activation by EBNA1. As to quaternary structure, (Microbial infection) Interacts with human herpes virus-8 (HHV-8) protein LANA. Post-translationally, phosphorylation by CK2 disrupt the intramolecular binding between the bromo domain 2 and the NPS region and promotes binding between the NPS and the BID regions, leading to activate the protein and promote binding to acetylated histones. In absence of phosphorylation, BRD4 does not localize to p53/TP53 target gene promoters, phosphorylation promoting recruitment to p53/TP53 target promoters. As to expression, ubiquitously expressed.

It is found in the nucleus. Its subcellular location is the chromosome. With respect to regulation, inhibited by JQ1, a thieno-triazolo-1,4-diazepine derivative, which specifically inhibits members of the BET family (BRD2, BRD3 and BRD4). The first bromo domain is inhibited by GSK778 (iBET-BD1), which specifically inhibits the first bromo domain of members of the BET family (BRD2, BRD3 and BRD4). The second bromo domain is inhibited by ABBV-744, which specifically inhibits the second bromo domain of members of the BET family (BRD2, BRD3 and BRD4). The second bromo domain is inhibited by GSK046 (iBET-BD2), which specifically inhibits the second bromo domain of members of the BET family (BRD2, BRD3 and BRD4). Chromatin reader protein that recognizes and binds acetylated histones and plays a key role in transmission of epigenetic memory across cell divisions and transcription regulation. Remains associated with acetylated chromatin throughout the entire cell cycle and provides epigenetic memory for postmitotic G1 gene transcription by preserving acetylated chromatin status and maintaining high-order chromatin structure. During interphase, plays a key role in regulating the transcription of signal-inducible genes by associating with the P-TEFb complex and recruiting it to promoters. Also recruits P-TEFb complex to distal enhancers, so called anti-pause enhancers in collaboration with JMJD6. BRD4 and JMJD6 are required to form the transcriptionally active P-TEFb complex by displacing negative regulators such as HEXIM1 and 7SKsnRNA complex from P-TEFb, thereby transforming it into an active form that can then phosphorylate the C-terminal domain (CTD) of RNA polymerase II. Regulates differentiation of naive CD4(+) T-cells into T-helper Th17 by promoting recruitment of P-TEFb to promoters. Promotes phosphorylation of 'Ser-2' of the C-terminal domain (CTD) of RNA polymerase II. According to a report, directly acts as an atypical protein kinase and mediates phosphorylation of 'Ser-2' of the C-terminal domain (CTD) of RNA polymerase II; these data however need additional evidences in vivo. In addition to acetylated histones, also recognizes and binds acetylated RELA, leading to further recruitment of the P-TEFb complex and subsequent activation of NF-kappa-B. Also acts as a regulator of p53/TP53-mediated transcription: following phosphorylation by CK2, recruited to p53/TP53 specific target promoters. Its function is as follows. Acts as a chromatin insulator in the DNA damage response pathway. Inhibits DNA damage response signaling by recruiting the condensin-2 complex to acetylated histones, leading to chromatin structure remodeling, insulating the region from DNA damage response by limiting spreading of histone H2AX/H2A.x phosphorylation. The chain is Bromodomain-containing protein 4 (BRD4) from Homo sapiens (Human).